Here is a 996-residue protein sequence, read N- to C-terminus: Disease resistance protein RGA4 (996 aa).

The interval 1-176 is structured coiled coil (CC) domain; that stretch reads MEAALLSGFI…PRIHEADLVG (176 aa). Positions 111–138 form a coiled coil; sequence NLQLAQQLQRLKRMAAEANQRKQRYTAA. The region spanning 180–462 is the NB-ARC domain; sequence DREELLEQLA…RWLAEGFVEP (283 aa). 11 LRR repeats span residues 481–503, 504–528, 529–549, 577–599, 600–621, 622–644, 698–722, 759–781, 782–804, 805–830, and 851–874; these read RNIIEPINVSNNDKVKTCQTYGM, MREFISHMSISQNFVTFFCDDKFVP, KYVRRLSLHGDTVVNGDNFNG, LRVLDLEKCDDLKDDHLKEICNL, VLLKYLSLGGNISKLPKDIAKL, KDLEALDVRRSKVKIMPVEVFGL, MNKLRKLKIWCTSSAGSTDWTDLRE, PCYLSSLKLHGNFPQLPQFVTSL, RGLKELCLSSTKFTTGLLEALSN, LSYLQYLKLVADELEKFIIKVQGFPR, and LPFLVTLQLLCKDLHGLSDIQIEC.

This sequence belongs to the disease resistance NB-LRR family. As to quaternary structure, forms homodimer or heterodimer with RGA5 through its coiled coil (CC) domain. In terms of tissue distribution, expressed in leaves.

The protein resides in the cytoplasm. In terms of biological role, disease resistance (R) protein. Resistance proteins guard the plant against pathogens that contain an appropriate avirulence protein via an indirect interaction with this avirulence protein. That triggers a defense system including the hypersensitive response, which restricts the pathogen growth. Contribution of RGA5 is required to recognize the effector avirulence proteins AVR-Pia and AVR1-CO39 from M.oryzae. Acts as a constitutively active cell death inducer that is repressed by RGA5. Immune response triggered by the RGA4-RGA5 -mediated recognition of AVR1-CO39 confers resistance to X.oryzae pathovars. The protein is Disease resistance protein RGA4 of Oryza sativa subsp. japonica (Rice).